A 590-amino-acid polypeptide reads, in one-letter code: 2-isopropylmalate synthase (590 aa).

The region spanning proline 40–aspartate 314 is the Pyruvate carboxyltransferase domain. Mg(2+) contacts are provided by aspartate 49, histidine 253, histidine 255, and asparagine 289. A regulatory domain region spans residues alanine 456–valine 590.

This sequence belongs to the alpha-IPM synthase/homocitrate synthase family. LeuA type 2 subfamily. As to quaternary structure, homodimer. Mg(2+) serves as cofactor.

The protein localises to the cytoplasm. It catalyses the reaction 3-methyl-2-oxobutanoate + acetyl-CoA + H2O = (2S)-2-isopropylmalate + CoA + H(+). The protein operates within amino-acid biosynthesis; L-leucine biosynthesis; L-leucine from 3-methyl-2-oxobutanoate: step 1/4. Catalyzes the condensation of the acetyl group of acetyl-CoA with 3-methyl-2-oxobutanoate (2-ketoisovalerate) to form 3-carboxy-3-hydroxy-4-methylpentanoate (2-isopropylmalate). This is 2-isopropylmalate synthase from Leifsonia xyli subsp. xyli (strain CTCB07).